We begin with the raw amino-acid sequence, 364 residues long: MSTATSAPVVESMSDTVVCPQLSRHSTSLEELYTIGYNRSHSPSCFSSAGCEEEEGQKNVLAERYKTKLCKNFVQYGTCPYDIRCMFAHGEEELRTAEMNIMDGLVTKDAITSFQKLWHRAVSASSGSKHHSSHVANRRGVMTTATTTTTAGGSTDAAMHICRRMQRVVAAAAAAVPCGGRRVVSGSIRIRGCVRHNPYCHNILPTVSRYYSTMPDVFTRPYSKSDSCGNEAITEGNAWTYANEEGNEKETPAMISSGVPELTAWKRFNYVAERSQCTSVPEQNLPCADFAAIKESNNTGGNASGVDVENVDDAEHSTCSSVGNESGYFCRASRSASCGEQSQSHLKREGNEGRGEGLHMFLSL.

The C3H1-type zinc finger occupies 64 to 92 (RYKTKLCKNFVQYGTCPYDIRCMFAHGEE). An MKT1-binding motif motif is present at residues 194–199 (VRHNPY). The segment at 340–364 (EQSQSHLKREGNEGRGEGLHMFLSL) is disordered. Residues 346–357 (LKREGNEGRGEG) show a composition bias toward basic and acidic residues.

In terms of assembly, interacts (via MKT1-binding motif) with MKT1. Interacts with PBP1 (via C-terminus); the interaction is direct. In terms of processing, phosphorylated at the N-terminus. CK1.2-dependent phosphorylation may lead to proteasome-dependent degradation of ZC3H11 in absence of stress.

Its subcellular location is the cytoplasm. RNA-binding protein involved in regulation of mRNA stability. Binds AU-rich regions in the 3'-UTR of mRNAs and promotes their stabilization by recruiting a MKT1-containing complex. Stabilizes chaperone mRNAs during stress that causes an accumulation of misfolded or unfolded proteins in the cytoplasm. The polypeptide is RNA-binding protein ZC3H11 (Trypanosoma brucei brucei (strain 927/4 GUTat10.1)).